The primary structure comprises 376 residues: WW domain-binding protein 4 (376 aa).

The Matrin-type zinc finger occupies 11–42 (KFCDYCKCWIADNRPSVEFHERGKNHKENVAR). A compositionally biased stretch (polar residues) spans 94-111 (PTVSPVISTVQPTPTSNQ). Disordered stretches follow at residues 94–127 (PTVS…ASKG) and 192–324 (WEKP…ECLS). Over residues 114 to 123 (EKKKKKKKKE) the composition is skewed to basic residues. 2 WW domains span residues 123–156 (EASK…KPEG) and 164–197 (TAAK…KPED). The span at 219-272 (EDAKSSDSHSDSEGEQKKAGEASTETKKLIIKFKEKNKSTEKRIGPEIQKEKST) shows a compositional bias: basic and acidic residues. Residues S228 and S230 each carry the phosphoserine modification. The interaction with SNRNP200 stretch occupies residues 357 to 375 (KKRRLENGKSRNLRQRGDD).

As to quaternary structure, component of the spliceosome B complex. Associated with U2 snRNPs. Binds splicing factors SNRPB, SNRPC and SF1. Interacts via the WW domains with the Pro-rich domains of KHDRBS1/SAM68. Interacts via the WW domains with the Pro-rich domains of WBP11. Interacts with SNRNP200.

It localises to the nucleus. Its subcellular location is the nucleus speckle. Functionally, involved in pre-mRNA splicing as a component of the spliceosome. May play a role in cross-intron bridging of U1 and U2 snRNPs in the mammalian A complex. This is WW domain-binding protein 4 (Wbp4) from Mus musculus (Mouse).